Here is a 360-residue protein sequence, read N- to C-terminus: Phospho-N-acetylmuramoyl-pentapeptide-transferase (360 aa).

Helical transmembrane passes span threonine 26–glutamine 46, threonine 73–leucine 93, valine 98–leucine 118, leucine 136–valine 156, tryptophan 168–serine 188, glycine 199–serine 219, glycine 235–tryptophan 255, valine 263–alanine 283, isoleucine 288–valine 308, and valine 338–lysine 358.

The protein belongs to the glycosyltransferase 4 family. MraY subfamily. Mg(2+) is required as a cofactor.

The protein localises to the cell inner membrane. It catalyses the reaction UDP-N-acetyl-alpha-D-muramoyl-L-alanyl-gamma-D-glutamyl-meso-2,6-diaminopimeloyl-D-alanyl-D-alanine + di-trans,octa-cis-undecaprenyl phosphate = di-trans,octa-cis-undecaprenyl diphospho-N-acetyl-alpha-D-muramoyl-L-alanyl-D-glutamyl-meso-2,6-diaminopimeloyl-D-alanyl-D-alanine + UMP. Its pathway is cell wall biogenesis; peptidoglycan biosynthesis. In terms of biological role, catalyzes the initial step of the lipid cycle reactions in the biosynthesis of the cell wall peptidoglycan: transfers peptidoglycan precursor phospho-MurNAc-pentapeptide from UDP-MurNAc-pentapeptide onto the lipid carrier undecaprenyl phosphate, yielding undecaprenyl-pyrophosphoryl-MurNAc-pentapeptide, known as lipid I. The polypeptide is Phospho-N-acetylmuramoyl-pentapeptide-transferase (Halorhodospira halophila (strain DSM 244 / SL1) (Ectothiorhodospira halophila (strain DSM 244 / SL1))).